The primary structure comprises 116 residues: Large ribosomal subunit protein bL20c (116 aa).

It belongs to the bacterial ribosomal protein bL20 family.

Its subcellular location is the plastid. The protein resides in the chloroplast. In terms of biological role, binds directly to 23S ribosomal RNA and is necessary for the in vitro assembly process of the 50S ribosomal subunit. It is not involved in the protein synthesizing functions of that subunit. The sequence is that of Large ribosomal subunit protein bL20c from Ipomoea purpurea (Common morning glory).